Here is a 639-residue protein sequence, read N- to C-terminus: Mediator of RNA polymerase II transcription subunit 17 (639 aa).

Residues Arg160–Arg187 adopt a coiled-coil conformation.

The protein belongs to the Mediator complex subunit 17 family. As to quaternary structure, component of the Mediator complex.

The protein resides in the nucleus. Component of the Mediator complex, a coactivator involved in the regulated transcription of nearly all RNA polymerase II-dependent genes. Mediator functions as a bridge to convey information from gene-specific regulatory proteins to the basal RNA polymerase II transcription machinery. Mediator is recruited to promoters by direct interactions with regulatory proteins and serves as a scaffold for the assembly of a functional preinitiation complex with RNA polymerase II and the general transcription factors. The sequence is that of Mediator of RNA polymerase II transcription subunit 17 (srb4) from Neosartorya fischeri (strain ATCC 1020 / DSM 3700 / CBS 544.65 / FGSC A1164 / JCM 1740 / NRRL 181 / WB 181) (Aspergillus fischerianus).